The following is a 2355-amino-acid chain: Acetyl-CoA carboxylase 2 (2355 aa).

Residues 138–645 (PIHSILVATN…HTGWLDSRIA (508 aa)) enclose the Biotin carboxylation domain. Positions 291–485 (GRSLVTVPEE…AAQVAVGMGI (195 aa)) constitute an ATP-grasp domain. Residue 317 to 374 (CQVVGYPAMIKASWGGGGKGIRKVHNDDEVRALFKQVQGEVPGSPIFIMKVASQSRHL) participates in ATP binding. E440, E454, and N456 together coordinate Mg(2+). 3 residues coordinate Mn(2+): E440, E454, and N456. Residue R458 is part of the active site. In terms of domain architecture, Biotinyl-binding spans 772 to 846 (LQNDHDPSKL…QAGELIAKLD (75 aa)). Position 813 is an N6-biotinyllysine (K813). The residue at position 1133 (T1133) is a Phosphothreonine. S1293 carries the post-translational modification Phosphoserine. The CoA carboxyltransferase N-terminal domain maps to 1593-1932 (QYKPLNNLDR…YVGGPLPVLA (340 aa)). A carboxyltransferase region spans residues 1593 to 2251 (QYKPLNNLDR…ESSLVRNIRK (659 aa)). 3 residues coordinate CoA: R1841, K2142, and R2144. The region spanning 1936 to 2251 (PPERTVEYIP…ESSLVRNIRK (316 aa)) is the CoA carboxyltransferase C-terminal domain.

Homodimer. Requires biotin as cofactor. It depends on Mg(2+) as a cofactor. Mn(2+) serves as cofactor. As to expression, widely expressed at low levels.

It is found in the cytoplasm. The protein resides in the cytosol. The enzyme catalyses hydrogencarbonate + acetyl-CoA + ATP = malonyl-CoA + ADP + phosphate + H(+). The catalysed reaction is N(6)-biotinyl-L-lysyl-[protein] + hydrogencarbonate + ATP = N(6)-carboxybiotinyl-L-lysyl-[protein] + ADP + phosphate + H(+). Its pathway is lipid metabolism; malonyl-CoA biosynthesis; malonyl-CoA from acetyl-CoA: step 1/1. Multifunctional enzyme that catalyzes the carboxylation of acetyl-CoA, forming malonyl-CoA, which is used in the plastid for fatty acid synthesis and in the cytosol in various biosynthetic pathways including fatty acid elongation. The protein is Acetyl-CoA carboxylase 2 (ACC2) of Arabidopsis thaliana (Mouse-ear cress).